We begin with the raw amino-acid sequence, 278 residues long: MPMGAAERGAGPQSSAAPWAGSEKAAKRGPSKSWYPRAAASDVTCPTGGDGADPKPGPFGGGLALGPAPRGTMNNNFCRALVDRRPLGPPSCMQLGVMPPPRQAPLPPAEPLGNVPFLLYPGPAEPPYYDAYAGVFPYVPFPGAFGVYEYPFEPAFIQKRNERERQRVKCVNEGYARLRGHLPGALAEKRLSKVETLRAAIRYIKYLQELLSSAPDGSTPPASRGLPGTGPCPAPPATPRPDRPGDGEARAPSSLVPESSESSCFSPSPFLESEESWH.

Residues Met-1–Gly-66 form a disordered region. The region spanning Ala-155–Leu-207 is the bHLH domain. A disordered region spans residues Ala-214–His-278. Residues Gly-230 to Pro-239 are compositionally biased toward pro residues. Positions Arg-240 to Ala-249 are enriched in basic and acidic residues. A compositionally biased stretch (low complexity) spans Pro-252 to Leu-271.

Interacts with transcription factor TCF3/E12.

It localises to the nucleus. Its function is as follows. Transcription factor. Probably binds E-box motifs 5'-CANNTG-3' in complex with transcription factor TCF3/E12. Negatively modulates transcription of target genes such as CDH1/E-cadherin, perhaps by recruiting the PRC2 repressive complex to regulatory elements. Regulates ameloblast development and tooth germ growth, perhaps acting by positively modulating migration of inner enamel epithelium (IEE) cells. Plays a role in enamel formation. The sequence is that of Achaete-scute homolog 5 (ASCL5) from Homo sapiens (Human).